The following is a 256-amino-acid chain: UPF0246 protein Sde_3824 (256 aa).

This sequence belongs to the UPF0246 family.

The polypeptide is UPF0246 protein Sde_3824 (Saccharophagus degradans (strain 2-40 / ATCC 43961 / DSM 17024)).